The chain runs to 181 residues: MIELEKHYYEKVFGQLKAHFNFKSPSQVPKITKVVVNMTAGNQSSNAKAIEAVLEDLAKITGQKAYKTVAKKSLATWKLRQGMPMGGKVTLRRQQMWNFLAKVLHIAIPRVRDFRGLSPKSFDGNGNFALGFKESIVFPEITFDKISKIRGLDVIIVTSAKNDQEGFKLLELLGFPFAKKV.

It belongs to the universal ribosomal protein uL5 family. Part of the 50S ribosomal subunit; part of the 5S rRNA/L5/L18/L25 subcomplex. Contacts the 5S rRNA and the P site tRNA. Forms a bridge to the 30S subunit in the 70S ribosome.

This is one of the proteins that bind and probably mediate the attachment of the 5S RNA into the large ribosomal subunit, where it forms part of the central protuberance. In the 70S ribosome it contacts protein S13 of the 30S subunit (bridge B1b), connecting the 2 subunits; this bridge is implicated in subunit movement. Contacts the P site tRNA; the 5S rRNA and some of its associated proteins might help stabilize positioning of ribosome-bound tRNAs. In Mesomycoplasma hyopneumoniae (strain 232) (Mycoplasma hyopneumoniae), this protein is Large ribosomal subunit protein uL5.